Here is a 287-residue protein sequence, read N- to C-terminus: ATP synthase gamma chain (287 aa).

It belongs to the ATPase gamma chain family. F-type ATPases have 2 components, CF(1) - the catalytic core - and CF(0) - the membrane proton channel. CF(1) has five subunits: alpha(3), beta(3), gamma(1), delta(1), epsilon(1). CF(0) has three main subunits: a, b and c.

It localises to the cell inner membrane. In terms of biological role, produces ATP from ADP in the presence of a proton gradient across the membrane. The gamma chain is believed to be important in regulating ATPase activity and the flow of protons through the CF(0) complex. This Colwellia psychrerythraea (strain 34H / ATCC BAA-681) (Vibrio psychroerythus) protein is ATP synthase gamma chain.